A 317-amino-acid chain; its full sequence is Iron-uptake system-binding protein (317 aa).

Positions 1 to 19 (MKKISLTLLILLLALTAAA) are cleaved as a signal peptide. C20 carries the N-palmitoyl cysteine lipid modification. C20 carries the S-diacylglycerol cysteine lipid modification. One can recognise a Fe/B12 periplasmic-binding domain in the interval 57 to 317 (IAITGSVESM…KAAAEKLTQN (261 aa)).

Belongs to the bacterial solute-binding protein 8 family. As to quaternary structure, the complex is composed of one ATP-binding protein (YusV), two transmembrane proteins (FeuB and FeuC) and a solute-binding protein (FeuA).

It localises to the cell membrane. It is found in the cytoplasm. Its subcellular location is the membrane raft. Involved in the uptake of iron. Its function is as follows. Part of the ABC transporter complex FeuABC/YusV involved in import of the catecholate siderophores bacillibactin and enterobactin. In Bacillus subtilis (strain 168), this protein is Iron-uptake system-binding protein (feuA).